The following is a 930-amino-acid chain: Translation initiation factor IF-2 (930 aa).

A compositionally biased stretch (low complexity) spans 50–67 (FKPAAAPKVEAKPAAPKV). Disordered regions lie at residues 50–217 (FKPA…SSEE) and 260–346 (EVVP…HELP). Composition is skewed to basic and acidic residues over residues 68 to 90 (SAEK…EAKP) and 110 to 125 (FKAE…AERR). Low complexity predominate over residues 129–141 (KGNNRDQQQNGNR). Basic and acidic residues-rich tracts occupy residues 157–167 (RDNRRFNDQAK) and 262–295 (VPEK…DGPR). A compositionally biased stretch (low complexity) spans 309 to 318 (NQKNSNWNNN). The span at 337 to 346 (VTERKFHELP) shows a compositional bias: basic and acidic residues. Positions 432-599 (ERPPVVTIMG…TVLLVAEIQE (168 aa)) constitute a tr-type G domain. The interval 441–448 (GHVDHGKT) is G1. Position 441-448 (441-448 (GHVDHGKT)) interacts with GTP. The segment at 466–470 (GITQH) is G2. The segment at 487 to 490 (DTPG) is G3. GTP is bound by residues 487 to 491 (DTPGH) and 541 to 544 (NKID). The segment at 541 to 544 (NKID) is G4. Residues 577-579 (SAK) form a G5 region.

This sequence belongs to the TRAFAC class translation factor GTPase superfamily. Classic translation factor GTPase family. IF-2 subfamily.

The protein resides in the cytoplasm. Functionally, one of the essential components for the initiation of protein synthesis. Protects formylmethionyl-tRNA from spontaneous hydrolysis and promotes its binding to the 30S ribosomal subunits. Also involved in the hydrolysis of GTP during the formation of the 70S ribosomal complex. The polypeptide is Translation initiation factor IF-2 (Streptococcus pneumoniae (strain ATCC 700669 / Spain 23F-1)).